A 274-amino-acid polypeptide reads, in one-letter code: Large ribosomal subunit protein uL2 (274 aa).

The interval 223 to 274 (VAMNPVDHPHGGGEGRTSGGRHPVTPWGVPTKGYKTRSNKRTDKYIVRRRNK) is disordered.

It belongs to the universal ribosomal protein uL2 family. In terms of assembly, part of the 50S ribosomal subunit. Forms a bridge to the 30S subunit in the 70S ribosome.

In terms of biological role, one of the primary rRNA binding proteins. Required for association of the 30S and 50S subunits to form the 70S ribosome, for tRNA binding and peptide bond formation. It has been suggested to have peptidyltransferase activity; this is somewhat controversial. Makes several contacts with the 16S rRNA in the 70S ribosome. In Shewanella baltica (strain OS223), this protein is Large ribosomal subunit protein uL2.